A 288-amino-acid chain; its full sequence is 33 kDa chaperonin (288 aa).

Intrachain disulfides connect cysteine 237–cysteine 239 and cysteine 270–cysteine 273.

It belongs to the HSP33 family. Post-translationally, under oxidizing conditions two disulfide bonds are formed involving the reactive cysteines. Under reducing conditions zinc is bound to the reactive cysteines and the protein is inactive.

Its subcellular location is the cytoplasm. In terms of biological role, redox regulated molecular chaperone. Protects both thermally unfolding and oxidatively damaged proteins from irreversible aggregation. Plays an important role in the bacterial defense system toward oxidative stress. This Agathobacter rectalis (strain ATCC 33656 / DSM 3377 / JCM 17463 / KCTC 5835 / VPI 0990) (Eubacterium rectale) protein is 33 kDa chaperonin.